The primary structure comprises 421 residues: Gamma-glutamyl phosphate reductase (421 aa).

The protein belongs to the gamma-glutamyl phosphate reductase family.

It is found in the cytoplasm. The catalysed reaction is L-glutamate 5-semialdehyde + phosphate + NADP(+) = L-glutamyl 5-phosphate + NADPH + H(+). It functions in the pathway amino-acid biosynthesis; L-proline biosynthesis; L-glutamate 5-semialdehyde from L-glutamate: step 2/2. In terms of biological role, catalyzes the NADPH-dependent reduction of L-glutamate 5-phosphate into L-glutamate 5-semialdehyde and phosphate. The product spontaneously undergoes cyclization to form 1-pyrroline-5-carboxylate. The sequence is that of Gamma-glutamyl phosphate reductase from Azotobacter vinelandii (strain DJ / ATCC BAA-1303).